We begin with the raw amino-acid sequence, 322 residues long: Chromoplast-specific carotenoid-associated protein, chromoplastic (322 aa).

Residues 1–58 (MAFVSQFNQLPCKTLALNPPQPQLTSKPSVFPIASIGATARAAAGKSLISVRPAFKVR) constitute a chromoplast transit peptide. The interval 67-88 (GEDKDEKYGDDSSVAVAEKEEE) is disordered.

The protein belongs to the PAP/fibrillin family. In terms of tissue distribution, expressed in corollas. Not detected in fruits, stems, leaves, and roots.

The protein localises to the plastid. It localises to the chromoplast. In terms of biological role, may be involved in carotenoid sequestration within chromoplasts. In Cucumis sativus (Cucumber), this protein is Chromoplast-specific carotenoid-associated protein, chromoplastic (CHRC).